A 225-amino-acid chain; its full sequence is Transcription factor HES-7 (225 aa).

The bHLH domain maps to 12 to 69; the sequence is GPKMLKPLVEKRRRDRINRSLEELRLLLLERTRDQNLRNPKLEKAEILEFAVGYLRER. In terms of domain architecture, Orange spans 92-122; the sequence is YLSGFRECLLRLAAFAHDASPAARSQLFSAL. Residues 124–225 are disordered; it reads GYRRPKPPRP…PPPAFWRPWP (102 aa). Composition is skewed to pro residues over residues 140–149 and 213–225; these read LPAPRPPLDP and PSLPPPAFWRPWP. The WRPW motif signature appears at 221 to 224; that stretch reads WRPW.

In terms of assembly, transcription repression requires formation of a complex with a corepressor protein of the Groucho/TLE family.

Its subcellular location is the nucleus. Its function is as follows. Transcriptional repressor. Represses transcription from both N box- and E box-containing promoters. May with HES1, cooperatively regulate somite formation in the presomitic mesoderm (PSM). May function as a segmentation clock, which is essential for coordinated somite segmentation. In Mus musculus (Mouse), this protein is Transcription factor HES-7 (Hes7).